A 711-amino-acid chain; its full sequence is MLLAAGARYARRLCGRGAAAALQGRTGRSCARDVSTSWSPVGAAFNVKPQSHLWNLLGERRGLFGVPELSTPEGFQVAQEEALKKTEWLVERACSTPPGPQTVLIFDELSDCLCRVADLADFVKIGHPDPAFREAAQEACRSIGTMVEKLNTNVELYQSLQRLLGDKKLMESLDAETRRVAELFMFDFEISGIHLDEEKRRRAVDLNVKILDLSNAFLMRTNFPNKIRKSLLPEHIQHHFARDGSHLIIDGLHAEASDDLVREAAYKIFLYPNADQLKCLEELLSSRDLLAKLVGYSTFSHRALQGTIAQTPETVMQFLEKLSEKLSERTRKDFKMMQGMKTKLNPQNSKLMPWDPPYYSGVIRAERYNIEPSLYCPFLSLGACMEGLNVLFNKLLGITLYAEQTFKGEVWCNDIRKLAVVHESEGLLGYIYCDFFQRANKPQQDCHFTIRGGRLKEDGSYQLPVVVLMLNLPHASRDFPTLLTPGMMENLFHEMGHAMHSMLGRTRYQHVTGTRCPTDFAEVPSILMEYFSNDYRVVSQFAKHYQTGQPLPKAMVSRLCESKKVCTAAEMQLQVFYAALDQIYHGQHPLKKSTTDILMETQEQFYGLPYVPDTAWQLRFSHLVGYGAKYYSYLMSRAVASMIWKECFLQDPFNRAAGERYRREMLAHGGGKEPMLMIQGMLQKCPSIDDFVDALVSDMNLDFETFFLDSK.

A mitochondrion-targeting transit peptide spans 1 to 33 (MLLAAGARYARRLCGRGAAAALQGRTGRSCARD). An N6-acetyllysine modification is found at lysine 124. Residue histidine 493 participates in Zn(2+) binding. Residue glutamate 494 is part of the active site. Residues histidine 497 and histidine 500 each coordinate Zn(2+).

The protein belongs to the peptidase M3 family. Monomer. Zn(2+) is required as a cofactor.

It is found in the mitochondrion matrix. The catalysed reaction is Release of an N-terminal octapeptide as second stage of processing of some proteins imported into the mitochondrion.. Its activity is regulated as follows. Activity is divalent cation-dependent. It is stimulated by manganese, magnesium or calcium ions and reversibly inhibited by zinc, cobalt and iron. Cleaves proteins, imported into the mitochondrion, to their mature size. This is Mitochondrial intermediate peptidase (Mipep) from Mus musculus (Mouse).